The chain runs to 299 residues: Large ribosomal subunit protein uL18 (299 aa).

The protein belongs to the universal ribosomal protein uL18 family. Component of the large ribosomal subunit (LSU). Interacts with Fmr1 to form the RNA-induced silencing complex (RISC), a ribonucleoprotein (RNP) complex involved in translation regulation, other components of the complex are Rm62, RpL11, AGO2 and Dcr-1.

The protein resides in the cytoplasm. It localises to the nucleus. Its function is as follows. Component of the ribosome, a large ribonucleoprotein complex responsible for the synthesis of proteins in the cell. The small ribosomal subunit (SSU) binds messenger RNAs (mRNAs) and translates the encoded message by selecting cognate aminoacyl-transfer RNA (tRNA) molecules. The large subunit (LSU) contains the ribosomal catalytic site termed the peptidyl transferase center (PTC), which catalyzes the formation of peptide bonds, thereby polymerizing the amino acids delivered by tRNAs into a polypeptide chain. The nascent polypeptides leave the ribosome through a tunnel in the LSU and interact with protein factors that function in enzymatic processing, targeting, and the membrane insertion of nascent chains at the exit of the ribosomal tunnel. This chain is Large ribosomal subunit protein uL18 (RpL5), found in Drosophila melanogaster (Fruit fly).